The primary structure comprises 212 residues: Ras-related protein Rab-15 (212 aa).

Residues Ser17, Gly18, Val19, Gly20, Lys21, Thr22, Cys23, Ser35, Ser39, and Thr40 each coordinate GTP. Position 22 (Thr22) interacts with Mg(2+). 2 consecutive short sequence motifs (switch) follow at residues 31–45 and 63–80; these read NEFH…GVDF and DTAG…YYRR. Mg(2+) contacts are provided by Thr40 and Asp63. Residues Gly66, Asn121, Lys122, Asp124, Ser151, and Ala152 each coordinate GTP. The tract at residues 192–212 is disordered; that stretch reads ELEEDEGKPEGPANSSKTCWC. S-geranylgeranyl cysteine attachment occurs at residues Cys210 and Cys212. Cys212 is modified (cysteine methyl ester).

The protein belongs to the small GTPase superfamily. Rab family. The GTP bound form of RAB15 interacts with REP15. Interacts (GTP-bound form) with MICAL1, MICAL3, MICALCL, EHBP1 and EHBP1L1. Mg(2+) serves as cofactor.

The protein resides in the cell membrane. The catalysed reaction is GTP + H2O = GDP + phosphate + H(+). With respect to regulation, regulated by guanine nucleotide exchange factors (GEFs) which promote the exchange of bound GDP for free GTP. Regulated by GTPase activating proteins (GAPs) which increase the GTP hydrolysis activity. Inhibited by GDP dissociation inhibitors (GDIs). The small GTPases Rab are key regulators of intracellular membrane trafficking, from the formation of transport vesicles to their fusion with membranes. Rabs cycle between an inactive GDP-bound form and an active GTP-bound form that is able to recruit to membranes different sets of downstream effectors directly responsible for vesicle formation, movement, tethering and fusion. RAB15 may act in concert with RAB3A in regulating aspects of synaptic vesicle membrane flow within the nerve terminal. This Mus musculus (Mouse) protein is Ras-related protein Rab-15.